Consider the following 281-residue polypeptide: Ribosomal RNA small subunit methyltransferase A (281 aa).

The S-adenosyl-L-methionine site is built by histidine 25, leucine 27, glycine 52, glutamate 74, aspartate 100, and asparagine 119.

Belongs to the class I-like SAM-binding methyltransferase superfamily. rRNA adenine N(6)-methyltransferase family. RsmA subfamily.

Its subcellular location is the cytoplasm. It carries out the reaction adenosine(1518)/adenosine(1519) in 16S rRNA + 4 S-adenosyl-L-methionine = N(6)-dimethyladenosine(1518)/N(6)-dimethyladenosine(1519) in 16S rRNA + 4 S-adenosyl-L-homocysteine + 4 H(+). Its function is as follows. Specifically dimethylates two adjacent adenosines (A1518 and A1519) in the loop of a conserved hairpin near the 3'-end of 16S rRNA in the 30S particle. May play a critical role in biogenesis of 30S subunits. The protein is Ribosomal RNA small subunit methyltransferase A of Paramagnetospirillum magneticum (strain ATCC 700264 / AMB-1) (Magnetospirillum magneticum).